Reading from the N-terminus, the 703-residue chain is Cyclomaltodextrin glucanotransferase (703 aa).

The N-terminal stretch at 1 to 29 is a signal peptide; sequence MNDLNDFLKTILLSFIFFLLLSLPTVAEA. The segment at 30-160 is A1; the sequence is DVTNKVNYSK…GIKVIMDFTP (131 aa). Ca(2+) contacts are provided by Asp-52, Asn-54, Asn-57, and Asn-58. The cysteines at positions 68 and 75 are disulfide-linked. Ca(2+) is bound by residues Gly-76 and Asp-78. A substrate-binding site is contributed by 122 to 123; that stretch reads YW. Asn-161 lines the Ca(2+) pocket. A b region spans residues 161–224; the sequence is NHSSPALETN…NLYDLADYDL (64 aa). Residue His-162 coordinates substrate. Ile-212 provides a ligand contact to Ca(2+). 215–218 lines the substrate pocket; it reads NLYD. Asp-221 is a Ca(2+) binding site. The tract at residues 225 to 428 is A2; the sequence is NNTVMDQYLK…LRQTNSALGY (204 aa). Arg-249 is a substrate binding site. The Nucleophile role is filled by Asp-251. 254 to 255 is a binding site for substrate; the sequence is KH. Residue His-255 participates in Ca(2+) binding. The Proton donor role is filled by Glu-279. Residues His-349, Asp-393, and Arg-397 each contribute to the substrate site. The interval 429–516 is c; the sequence is GTTTERWLNE…SVAVWQVSNP (88 aa). Positions 517 to 600 are d; that stretch reads STSPLIGQVG…SPTYKEFEVL (84 aa). One can recognise an IPT/TIG domain in the interval 520–598; sequence PLIGQVGPMM…IKSPTYKEFE (79 aa). The region spanning 599-703 is the CBM20 domain; sequence VLSGNQVSVR…TGTDTVMINW (105 aa). Positions 601-703 are e; the sequence is SGNQVSVRFG…TGTDTVMINW (103 aa).

Belongs to the glycosyl hydrolase 13 family. Monomer. Ca(2+) serves as cofactor.

Its subcellular location is the secreted. It catalyses the reaction Cyclizes part of a (1-&gt;4)-alpha-D-glucan chain by formation of a (1-&gt;4)-alpha-D-glucosidic bond.. The sequence is that of Cyclomaltodextrin glucanotransferase (cgt) from Bacillus sp. (strain 1-1).